Consider the following 747-residue polypeptide: ESX-1 secretion system protein EccCa1 (747 aa).

Helical transmembrane passes span 41–61, 65–85, and 222–242; these read ILPYVMGGAMLGMIAIMVAGG, LSPYMLMMPLMMIVMMVGGLA, and FPTIAIGGDLAGAAGLMTAMI. The FtsK domain maps to 456 to 665; sequence GNVMYLDIKE…LRTTSSHESK (210 aa). 479–486 lines the ATP pocket; it reads GTTGSGKS.

In terms of assembly, part of the ESX-1 / type VII secretion system (T7SS), which is composed of cytosolic and membrane components. The ESX-1 membrane complex is composed of EccB1, EccCa1, EccCb1, EccD1 and EccE1.

The protein localises to the cell inner membrane. Functionally, part of the ESX-1 specialized secretion system, which delivers several virulence factors to host cells during infection, including the key virulence factors EsxA (ESAT-6) and EsxB (CFP-10). This Mycobacterium tuberculosis (strain CDC 1551 / Oshkosh) protein is ESX-1 secretion system protein EccCa1.